A 98-amino-acid polypeptide reads, in one-letter code: Cystatin-A (98 aa).

Met-1 carries the N-acetylmethionine modification. The short motif at Gln-46–Gly-50 is the Secondary area of contact element.

This sequence belongs to the cystatin family.

The protein localises to the cytoplasm. In terms of biological role, this is an intracellular thiol proteinase inhibitor. In Felis catus (Cat), this protein is Cystatin-A (CSTA).